Here is a 172-residue protein sequence, read N- to C-terminus: MADETSADINNPALQPNGEDTSPAIGLISQYVKDLSFENPNAPAVYQWQGAPQVDVQFNIAADSVGDNLYEVLLKIDVTSKTDKGTSFVIELKYAGLFGVRNVPDDQLQPFFLAEAPRILFPFARRVVADAVQDGGFPALLLEPIDFHGLFMQQVQAAQGEQVGDGAPVGQA.

Residues 1 to 22 (MADETSADINNPALQPNGEDTS) are disordered. Over residues 7 to 20 (ADINNPALQPNGED) the composition is skewed to polar residues.

It belongs to the SecB family. In terms of assembly, homotetramer, a dimer of dimers. One homotetramer interacts with 1 SecA dimer.

It localises to the cytoplasm. Functionally, one of the proteins required for the normal export of preproteins out of the cell cytoplasm. It is a molecular chaperone that binds to a subset of precursor proteins, maintaining them in a translocation-competent state. It also specifically binds to its receptor SecA. The sequence is that of Protein-export protein SecB from Sphingopyxis alaskensis (strain DSM 13593 / LMG 18877 / RB2256) (Sphingomonas alaskensis).